Consider the following 378-residue polypeptide: Zinc finger protein DPF3 (378 aa).

Lys99 participates in a covalent cross-link: Glycyl lysine isopeptide (Lys-Gly) (interchain with G-Cter in SUMO2). A disordered region spans residues 146 to 193; it reads LENDENVEEGNEEEDLEEDVPKRKNRTRGRARGSAGGRRRHDAASQED. Residues 148–163 are compositionally biased toward acidic residues; that stretch reads NDENVEEGNEEEDLEE. Over residues 168 to 186 the composition is skewed to basic residues; that stretch reads RKNRTRGRARGSAGGRRRH. The C2H2-type zinc finger occupies 198–221; the sequence is YVCDICGKRYKNRPGLSYHYAHTH. Positions 225–254 are disordered; that stretch reads EEGDEAQDQETRSPPNHRNENHRPQKGPDG. PHD-type zinc fingers lie at residues 259-319 and 316-366; these read NNYC…CKSC and CKSC…CWEL. An interaction with HDGFL2 region spans residues 317-332; that stretch reads KSCILCGTSENDDQLL. Gly323 carries the post-translational modification Phosphoserine.

Belongs to the requiem/DPF family. In terms of assembly, component of the BAF complex, which includes at least actin (ACTB), ARID1A, ARID1B/BAF250, SMARCA2, SMARCA4/BRG1/BAF190A, ACTL6A/BAF53, ACTL6B/BAF53B, SMARCE1/BAF57, SMARCC1/BAF155, SMARCC2/BAF170, SMARCB1/SNF5/INI1, and one or more of SMARCD1/BAF60A, SMARCD2/BAF60B, or SMARCD3/BAF60C. In muscle cells, the BAF complex also contains DPF3. Interacts with acetylated histones H3 and H4. Component of neuron-specific chromatin remodeling complex (nBAF complex) composed of at least, ARID1A/BAF250A or ARID1B/BAF250B, SMARCD1/BAF60A, SMARCD3/BAF60C, SMARCA2/BRM/BAF190B, SMARCA4/BRG1/BAF190A, SMARCB1/BAF47, SMARCC1/BAF155, SMARCE1/BAF57, SMARCC2/BAF170, DPF1/BAF45B, DPF3/BAF45C, ACTL6B/BAF53B and actin. As to quaternary structure, interacts with HDGFL2. Interacts with SMARCA4/BRG1/BAF190A, SMARCC1/BAF155 and SMARCD1/BAF60A. As to expression, expressed in the heart and somites. Expressed in cerebellum and spinal cord, but not in cerebral cortex. Expressed specifically in post-mitotic neurons (at protein level).

The protein localises to the nucleus. In terms of biological role, muscle-specific component of the BAF complex, a multiprotein complex involved in transcriptional activation and repression of select genes by chromatin remodeling (alteration of DNA-nucleosome topology). Specifically binds acetylated lysines on histone 3 and 4 (H3K14ac, H3K9ac, H4K5ac, H4K8ac, H4K12ac, H4K16ac). In the complex, it acts as a tissue-specific anchor between histone acetylations and methylations and chromatin remodeling. It thereby probably plays an essential role in heart and skeletal muscle development. Belongs to the neuron-specific chromatin remodeling complex (nBAF complex). During neural development a switch from a stem/progenitor to a post-mitotic chromatin remodeling mechanism occurs as neurons exit the cell cycle and become committed to their adult state. The transition from proliferating neural stem/progenitor cells to post-mitotic neurons requires a switch in subunit composition of the npBAF and nBAF complexes. As neural progenitors exit mitosis and differentiate into neurons, npBAF complexes which contain ACTL6A/BAF53A and PHF10/BAF45A, are exchanged for homologous alternative ACTL6B/BAF53B and DPF1/BAF45B or DPF3/BAF45C subunits in neuron-specific complexes (nBAF). The npBAF complex is essential for the self-renewal/proliferative capacity of the multipotent neural stem cells. The nBAF complex along with CREST plays a role regulating the activity of genes essential for dendrite growth. Acts as a regulator of myogenesis in cooperation with HDGFL2. Mediates the interaction of HDGFL2 with the BAF complex. HDGFL2-DPF3a activate myogenic genes by increasing chromatin accessibility through recruitment of SMARCA4/BRG1/BAF190A (ATPase subunit of the BAF complex) to myogenic gene promoters. This chain is Zinc finger protein DPF3 (Dpf3), found in Mus musculus (Mouse).